The sequence spans 473 residues: ATP synthase subunit beta (473 aa).

Residue 158-165 (GGAGVGKT) coordinates ATP.

This sequence belongs to the ATPase alpha/beta chains family. As to quaternary structure, F-type ATPases have 2 components, CF(1) - the catalytic core - and CF(0) - the membrane proton channel. CF(1) has five subunits: alpha(3), beta(3), gamma(1), delta(1), epsilon(1). CF(0) has three main subunits: a(1), b(2) and c(9-12). The alpha and beta chains form an alternating ring which encloses part of the gamma chain. CF(1) is attached to CF(0) by a central stalk formed by the gamma and epsilon chains, while a peripheral stalk is formed by the delta and b chains.

Its subcellular location is the cell membrane. The enzyme catalyses ATP + H2O + 4 H(+)(in) = ADP + phosphate + 5 H(+)(out). Produces ATP from ADP in the presence of a proton gradient across the membrane. The catalytic sites are hosted primarily by the beta subunits. In Bacillus pumilus (strain SAFR-032), this protein is ATP synthase subunit beta.